A 76-amino-acid chain; its full sequence is Small ribosomal subunit protein bS18 (76 aa).

Belongs to the bacterial ribosomal protein bS18 family. In terms of assembly, part of the 30S ribosomal subunit. Forms a tight heterodimer with protein bS6.

Functionally, binds as a heterodimer with protein bS6 to the central domain of the 16S rRNA, where it helps stabilize the platform of the 30S subunit. The protein is Small ribosomal subunit protein bS18 of Psychrobacter arcticus (strain DSM 17307 / VKM B-2377 / 273-4).